Here is a 949-residue protein sequence, read N- to C-terminus: General transcription factor II-I repeat domain-containing protein 2A (949 aa).

2 GTF2I-like repeats span residues 98-192 (QVHS…QLGG) and 323-417 (LSSI…SNVG).

It belongs to the TFII-I family. Ubiquitous.

It localises to the nucleus. This is General transcription factor II-I repeat domain-containing protein 2A (GTF2IRD2) from Homo sapiens (Human).